The sequence spans 309 residues: Uricase (309 aa).

Ala-2 is modified (N-acetylalanine). Residues Lys-16 and Thr-63 each act as charge relay system in the active site. Positions 63, 64, 165, 182, 237, 238, and 264 each coordinate urate. His-266 serves as the catalytic Charge relay system. Positions 307-309 (SKL) match the Microbody targeting signal motif.

The protein belongs to the uricase family.

It is found in the peroxisome. The catalysed reaction is urate + O2 + H2O = 5-hydroxyisourate + H2O2. It functions in the pathway purine metabolism; urate degradation; (S)-allantoin from urate: step 1/3. Its function is as follows. Catalyzes the oxidation of uric acid to 5-hydroxyisourate, which is further processed to form (S)-allantoin. The polypeptide is Uricase (Arabidopsis thaliana (Mouse-ear cress)).